We begin with the raw amino-acid sequence, 274 residues long: Thiamine kinase (274 aa).

This sequence belongs to the thiamine kinase family.

It catalyses the reaction thiamine + ATP = thiamine phosphate + ADP + H(+). The protein operates within cofactor biosynthesis; thiamine diphosphate biosynthesis; thiamine phosphate from thiamine: step 1/1. Catalyzes the ATP-dependent phosphorylation of thiamine to thiamine phosphate. Is involved in thiamine salvage. The chain is Thiamine kinase from Salmonella typhi.